The chain runs to 497 residues: Probable sensor kinase SilS (497 aa).

Over 1–15 (MHSKPSRLPFSLALR) the chain is Cytoplasmic. Residues 16-36 (LTFFISLSTILAFIAFTWFML) traverse the membrane as a helical segment. Residues 37–186 (HSVEKHFAEQ…HLHYLDALKK (150 aa)) are Periplasmic-facing. The helical transmembrane segment at 187–207 (NLIAIAVVISLLIVLIIRIAV) threads the bilayer. The region spanning 208–261 (RQGHLPLRNVSNAIKNITSENLDARLEPTRVPIELEQLVISFNHMIGKIEDVFT) is the HAMP domain. Topologically, residues 208-497 (RQGHLPLRNV…KMIPDTQCWE (290 aa)) are cytoplasmic. Residues 269–487 (DIAHEIRTPI…RFILSVPRLE (219 aa)) enclose the Histidine kinase domain. Histidine 272 is modified (phosphohistidine; by autocatalysis).

The protein localises to the cell inner membrane. The enzyme catalyses ATP + protein L-histidine = ADP + protein N-phospho-L-histidine.. In terms of biological role, component of the sil cation-efflux system that confers resistance to silver. Probable member of a two-component regulatory system SilS/SilR. May activate SilR by phosphorylation. This is Probable sensor kinase SilS (silS) from Salmonella typhimurium.